Here is a 150-residue protein sequence, read N- to C-terminus: Catabolic 3-dehydroquinase 1 (150 aa).

Tyr24 acts as the Proton acceptor in catalysis. Substrate contacts are provided by Asn75, His81, and Asp88. The Proton donor role is filled by His101. Substrate contacts are provided by residues 102 to 103 (VS) and Arg112.

The protein belongs to the type-II 3-dehydroquinase family. In terms of assembly, homododecamer. Adopts a ring-like structure, composed of an arrangement of two hexameric rings stacked on top of one another.

The catalysed reaction is 3-dehydroquinate = 3-dehydroshikimate + H2O. It functions in the pathway aromatic compound metabolism; 3,4-dihydroxybenzoate biosynthesis; 3,4-dihydroxybenzoate from 3-dehydroquinate: step 1/2. Its function is as follows. Is involved in the catabolism of quinate. Allows the utilization of quinate as carbon source via the beta-ketoadipate pathway. The chain is Catabolic 3-dehydroquinase 1 from Aspergillus fumigatus (strain ATCC MYA-4609 / CBS 101355 / FGSC A1100 / Af293) (Neosartorya fumigata).